Consider the following 97-residue polypeptide: Nuclear protein 2 (97 aa).

The disordered stretch occupies residues 76-97 (LLNGQRKRRQRQLHPKMRTRLT). Residues 80–97 (QRKRRQRQLHPKMRTRLT) are compositionally biased toward basic residues.

Belongs to the NUPR family.

It localises to the nucleus. Acts as a transcriptional repressor by inhibiting gene expression at the NUPR1 promoter in a p53/TP53-dependent manner in cancer cells. Involved in the G1 cell cycle arrest, and in a decrease in cell viability and cell proliferation. Plays a role as a negative regulator of the protumoral factor NUPR1. In Homo sapiens (Human), this protein is Nuclear protein 2.